Here is a 283-residue protein sequence, read N- to C-terminus: MTDSQITAQILTESLKYFLKYRDQTVVIKYGGNVMIDEKVKESILKDILLLKTVGIKVVLVHGGGPAIGELLEKYEQKSQFVKGLRVTNKKTAQLALTALAGKVNKSLVQDIIRLGGNAIGVSGIDGKLIEAKPISEDLGYVGEITAIHPEIIERINQTDAVPVIASAAIGLDGEIYNVNADTAASRIAGSLCAEQFILLSDVRGLYGNFPDEGSFIDEINLTNLEKLVKEKKITDGMIPKIEAIKYAMQEGLGQAVLLDGRVPHALLLELFTDRGQGTLINH.

Residues 64–65 (GG), arginine 86, and asparagine 178 contribute to the substrate site.

The protein belongs to the acetylglutamate kinase family. ArgB subfamily.

Its subcellular location is the cytoplasm. It catalyses the reaction N-acetyl-L-glutamate + ATP = N-acetyl-L-glutamyl 5-phosphate + ADP. It functions in the pathway amino-acid biosynthesis; L-arginine biosynthesis; N(2)-acetyl-L-ornithine from L-glutamate: step 2/4. Functionally, catalyzes the ATP-dependent phosphorylation of N-acetyl-L-glutamate. The polypeptide is Acetylglutamate kinase (Lactococcus lactis subsp. cremoris (strain SK11)).